A 255-amino-acid chain; its full sequence is MTGTPLLSFEPLTEGILLKRYKRFLADIELEDGSCVTAHCANTGPMTGVLIPGQRVRLRHAPSPTRKLAWTWEQAEVPGADGQLCWVGINTALPNRLIRATIEAGCLREQLGEIESIRAEVVYGKNRKSRIDLLLQPSREAIDQRPIYVEVKNTTWSTGSTALFPDTVTTRGQKHLQELMDVLPEARAVLIPCLSRPDVTAFAPGDSADPRYGELFRNALDAGVEVLPCCFRFDRDGVTWQGTRPAQGQQPSAAL.

This sequence belongs to the SfsA family.

This is Sugar fermentation stimulation protein homolog from Synechococcus sp. (strain WH7803).